A 252-amino-acid polypeptide reads, in one-letter code: Urease accessory protein UreH (252 aa).

This sequence belongs to the UreD family. UreH, UreF and UreG form a complex that acts as a GTP-hydrolysis-dependent molecular chaperone, activating the urease apoprotein by helping to assemble the nickel containing metallocenter of UreC. The UreE protein probably delivers the nickel.

It localises to the cytoplasm. In terms of biological role, required for maturation of urease via the functional incorporation of the urease nickel metallocenter. The polypeptide is Urease accessory protein UreH (Helicobacter hepaticus (strain ATCC 51449 / 3B1)).